The following is a 286-amino-acid chain: Bifunctional protein FolD 2 (286 aa).

NADP(+)-binding positions include 165 to 167 (GRG), T192, and V233.

It belongs to the tetrahydrofolate dehydrogenase/cyclohydrolase family. Homodimer.

The catalysed reaction is (6R)-5,10-methylene-5,6,7,8-tetrahydrofolate + NADP(+) = (6R)-5,10-methenyltetrahydrofolate + NADPH. It catalyses the reaction (6R)-5,10-methenyltetrahydrofolate + H2O = (6R)-10-formyltetrahydrofolate + H(+). It functions in the pathway one-carbon metabolism; tetrahydrofolate interconversion. Functionally, catalyzes the oxidation of 5,10-methylenetetrahydrofolate to 5,10-methenyltetrahydrofolate and then the hydrolysis of 5,10-methenyltetrahydrofolate to 10-formyltetrahydrofolate. This Rhodococcus jostii (strain RHA1) protein is Bifunctional protein FolD 2.